A 355-amino-acid chain; its full sequence is uncharacterized protein (355 aa).

This is an uncharacterized protein from Acanthamoeba polyphaga (Amoeba).